A 410-amino-acid polypeptide reads, in one-letter code: Calsequestrin-2 (410 aa).

An N-terminal signal peptide occupies residues 1-19 (MKRTHLFIAGLYLLASCRA). A calcium regulated hydrophobic site region spans residues 221-242 (MDEPIAIPDKPYTEEELVEFVK). Tyr-282 is subject to Phosphotyrosine. N-linked (GlcNAc...) asparagine glycans are attached at residues Asn-335 and Asn-395. The tract at residues 364–410 (DVLSGKINTEDDDNEEGDDGDDDEDDDDDDGNNSDEESNDDSDDDDE) is disordered. Residues 373–410 (EDDDNEEGDDGDDDEDDDDDDGNNSDEESNDDSDDDDE) show a composition bias toward acidic residues. Ser-397, Ser-401, and Ser-405 each carry phosphoserine; by CK2.

This sequence belongs to the calsequestrin family. As to quaternary structure, interacts with ASPH. Monomer, homodimer and homooligomer. Mostly monomeric in the absence of calcium. Forms higher oligomers in a calcium-dependent manner. Dimers associate to form tetramers, that then form linear homomer chains. Interacts with TRDN. In terms of processing, phosphorylation in the C-terminus, probably by CK2, moderately increases calcium buffering capacity. Post-translationally, N-glycosylated. Detected in heart muscle (at protein level).

It is found in the sarcoplasmic reticulum lumen. Its function is as follows. Calsequestrin is a high-capacity, moderate affinity, calcium-binding protein and thus acts as an internal calcium store in muscle. Calcium ions are bound by clusters of acidic residues at the protein surface, especially at the interface between subunits. Can bind around 60 Ca(2+) ions. Regulates the release of lumenal Ca(2+) via the calcium release channel RYR2; this plays an important role in triggering muscle contraction. Plays a role in excitation-contraction coupling in the heart and in regulating the rate of heart beats. The chain is Calsequestrin-2 (CASQ2) from Canis lupus familiaris (Dog).